We begin with the raw amino-acid sequence, 152 residues long: Xanthine-guanine phosphoribosyltransferase (152 aa).

Residues 37 to 38 (RG), R69, and 88 to 96 (DDLVDTGGT) each bind 5-phospho-alpha-D-ribose 1-diphosphate. R69 provides a ligand contact to GMP. D89 is a binding site for Mg(2+). Residues D92 and I135 each contribute to the guanine site. Residues D92 and I135 each coordinate xanthine. GMP contacts are provided by residues 92–96 (DTGGT) and 134–135 (WI).

The protein belongs to the purine/pyrimidine phosphoribosyltransferase family. XGPT subfamily. In terms of assembly, homotetramer. Mg(2+) serves as cofactor.

Its subcellular location is the cell inner membrane. The enzyme catalyses GMP + diphosphate = guanine + 5-phospho-alpha-D-ribose 1-diphosphate. The catalysed reaction is XMP + diphosphate = xanthine + 5-phospho-alpha-D-ribose 1-diphosphate. It catalyses the reaction IMP + diphosphate = hypoxanthine + 5-phospho-alpha-D-ribose 1-diphosphate. Its pathway is purine metabolism; GMP biosynthesis via salvage pathway; GMP from guanine: step 1/1. It participates in purine metabolism; XMP biosynthesis via salvage pathway; XMP from xanthine: step 1/1. Functionally, purine salvage pathway enzyme that catalyzes the transfer of the ribosyl-5-phosphate group from 5-phospho-alpha-D-ribose 1-diphosphate (PRPP) to the N9 position of the 6-oxopurines guanine and xanthine to form the corresponding ribonucleotides GMP (guanosine 5'-monophosphate) and XMP (xanthosine 5'-monophosphate), with the release of PPi. To a lesser extent, also acts on hypoxanthine. This chain is Xanthine-guanine phosphoribosyltransferase, found in Klebsiella pneumoniae (strain 342).